The chain runs to 72 residues: Translation initiation factor IF-1 (72 aa).

Positions Met1–Lys72 constitute an S1-like domain.

It belongs to the IF-1 family. Component of the 30S ribosomal translation pre-initiation complex which assembles on the 30S ribosome in the order IF-2 and IF-3, IF-1 and N-formylmethionyl-tRNA(fMet); mRNA recruitment can occur at any time during PIC assembly.

It localises to the cytoplasm. One of the essential components for the initiation of protein synthesis. Stabilizes the binding of IF-2 and IF-3 on the 30S subunit to which N-formylmethionyl-tRNA(fMet) subsequently binds. Helps modulate mRNA selection, yielding the 30S pre-initiation complex (PIC). Upon addition of the 50S ribosomal subunit IF-1, IF-2 and IF-3 are released leaving the mature 70S translation initiation complex. The sequence is that of Translation initiation factor IF-1 from Hydrogenovibrio crunogenus (strain DSM 25203 / XCL-2) (Thiomicrospira crunogena).